We begin with the raw amino-acid sequence, 251 residues long: Methylthioribulose-1-phosphate dehydratase (251 aa).

Residues 1-26 (MTSVCDATNEDKENGSESTESQDKEH) form a disordered region. Residues 9 to 26 (NEDKENGSESTESQDKEH) show a composition bias toward basic and acidic residues. Cysteine 100 provides a ligand contact to substrate. Residues histidine 118 and histidine 120 each coordinate Zn(2+). The Proton donor/acceptor role is filled by glutamate 142. Residue histidine 198 coordinates Zn(2+). The disordered stretch occupies residues 232-251 (MDPSAPPIEENHYYDVQQSQ).

Belongs to the aldolase class II family. MtnB subfamily. Zn(2+) is required as a cofactor.

Its subcellular location is the cytoplasm. The catalysed reaction is 5-(methylsulfanyl)-D-ribulose 1-phosphate = 5-methylsulfanyl-2,3-dioxopentyl phosphate + H2O. Its pathway is amino-acid biosynthesis; L-methionine biosynthesis via salvage pathway; L-methionine from S-methyl-5-thio-alpha-D-ribose 1-phosphate: step 2/6. Functionally, catalyzes the dehydration of methylthioribulose-1-phosphate (MTRu-1-P) into 2,3-diketo-5-methylthiopentyl-1-phosphate (DK-MTP-1-P). Functions in the methionine salvage pathway. May play a role in apoptosis. In Salmo salar (Atlantic salmon), this protein is Methylthioribulose-1-phosphate dehydratase.